Reading from the N-terminus, the 126-residue chain is Ribosome-binding factor A (126 aa).

The protein belongs to the RbfA family. Monomer. Binds 30S ribosomal subunits, but not 50S ribosomal subunits or 70S ribosomes.

It is found in the cytoplasm. Functionally, one of several proteins that assist in the late maturation steps of the functional core of the 30S ribosomal subunit. Associates with free 30S ribosomal subunits (but not with 30S subunits that are part of 70S ribosomes or polysomes). Required for efficient processing of 16S rRNA. May interact with the 5'-terminal helix region of 16S rRNA. This chain is Ribosome-binding factor A, found in Geobacillus sp. (strain WCH70).